Consider the following 548-residue polypeptide: 1,3-beta-glucanosyltransferase gel4 (548 aa).

The signal sequence occupies residues 1–25; the sequence is MKFVYAAAGASLVGSALATLPVIEA. Residues asparagine 51 and asparagine 69 are each glycosylated (N-linked (GlcNAc...) asparagine). A disulfide bond links cysteine 88 and cysteine 117. Residues tyrosine 106, 133 to 141, asparagine 174, and glutamate 175 each bind (1,3-beta-D-glucosyl)n; that span reads SAPSESINR. Glutamate 175 acts as the Proton donor in catalysis. Asparagine 181 is a glycosylation site (N-linked (GlcNAc...) asparagine). 2 residues coordinate (1,3-beta-D-glucosyl)n: aspartate 217 and arginine 222. 5 disulfide bridges follow: cysteine 231-cysteine 364, cysteine 249-cysteine 280, cysteine 386-cysteine 437, cysteine 395-cysteine 461, and cysteine 414-cysteine 419. Glutamate 277 functions as the Nucleophile in the catalytic mechanism. Tyrosine 309 is a binding site for (1,3-beta-D-glucosyl)n. A glycan (N-linked (GlcNAc...) asparagine) is linked at asparagine 425. Alanine 519 is lipidated: GPI-like-anchor amidated alanine. Residues 520–548 constitute a propeptide, removed in mature form; that stretch reads SPMAVKVGNWQFGAYIATALFAGVGMLVL.

This sequence belongs to the glycosyl hydrolase 72 family. The GPI-like anchor contains a phosphoceramide lipid group.

It is found in the cell membrane. Functionally, splits internally a 1,3-beta-glucan molecule and transfers the newly generated reducing end (the donor) to the non-reducing end of another 1,3-beta-glucan molecule (the acceptor) forming a 1,3-beta linkage, resulting in the elongation of 1,3-beta-glucan chains in the cell wall. Involved in cell wall morphogenesis. In Aspergillus fumigatus (strain ATCC MYA-4609 / CBS 101355 / FGSC A1100 / Af293) (Neosartorya fumigata), this protein is 1,3-beta-glucanosyltransferase gel4 (gel4).